Here is a 612-residue protein sequence, read N- to C-terminus: DNA mismatch repair protein MutL (612 aa).

The protein belongs to the DNA mismatch repair MutL/HexB family.

Its function is as follows. This protein is involved in the repair of mismatches in DNA. It is required for dam-dependent methyl-directed DNA mismatch repair. May act as a 'molecular matchmaker', a protein that promotes the formation of a stable complex between two or more DNA-binding proteins in an ATP-dependent manner without itself being part of a final effector complex. In Bartonella quintana (strain Toulouse) (Rochalimaea quintana), this protein is DNA mismatch repair protein MutL.